The primary structure comprises 417 residues: Serine/threonine-protein phosphatase 4 regulatory subunit 2 (417 aa).

Composition is skewed to polar residues over residues 140-149 (EKNNSNSLNR), 158-170 (NSPSYTERSNING), and 186-196 (APMTTNGLPES). A disordered region spans residues 140-417 (EKNNSNSLNR…EVTDEPMEQD (278 aa)). Phosphoserine is present on Ser-159. Residues 197 to 213 (TDSKEANLQQNEEKNHS) show a composition bias toward basic and acidic residues. The segment covering 214-226 (DSSTSESEVSSVS) has biased composition (low complexity). Phosphoserine is present on Ser-226. The span at 231 to 258 (KHPDEDAVEAEGHEVKRLRFDKEGEVRE) shows a compositional bias: basic and acidic residues. Residues 259-269 (TASQTTSSEIS) are compositionally biased toward polar residues. Over residues 283–297 (QDKDKDSRCTRQHCT) the composition is skewed to basic and acidic residues. Positions 298–311 (EEDEEEDEEEEEES) are enriched in acidic residues. Over residues 318-327 (MIPERKNQEK) the composition is skewed to basic and acidic residues. Acidic residues predominate over residues 338–350 (ETSEENNQMEESD). A compositionally biased stretch (basic and acidic residues) spans 353–363 (QAEKDLLHSEG). The span at 366-375 (NEGPVSSSSS) shows a compositional bias: low complexity. Polar residues predominate over residues 385-399 (GSNSSKTGEILSESS). Over residues 400–417 (MENDDEATEVTDEPMEQD) the composition is skewed to acidic residues.

It belongs to the PPP4R2 family. Serine/threonine-protein phosphatase 4 (PP4) occurs in different assemblies of the catalytic and one or more regulatory subunits. Component of the PP4 complexes PPP4C-PPP4R2, PPP4C-PPP4R2-PPP4R3A and PPP4C-PPP4R2-PPP4R3B. The PPP4C-PPP4R2 complex appears to be a tetramer composed of 2 molecules of PPP4C and 2 molecules of PPP4R2. Interacts with DDX20/GEMIN3 and GEMIN4. Interacts with RPA2; this DNA damage-dependent interaction recruits PPP4C leading to RPA2 dephosphorylation. Widely expressed.

It localises to the cytoplasm. The protein localises to the cytoskeleton. Its subcellular location is the microtubule organizing center. The protein resides in the centrosome. It is found in the nucleus. Regulatory subunit of serine/threonine-protein phosphatase 4 (PP4). May regulate the activity of PPP4C at centrosomal microtubule organizing centers. Its interaction with the SMN complex leads to enhance the temporal localization of snRNPs, suggesting a role of PPP4C in maturation of spliceosomal snRNPs. The PPP4C-PPP4R2-PPP4R3A PP4 complex specifically dephosphorylates H2AX phosphorylated on 'Ser-140' (gamma-H2AX) generated during DNA replication and required for DNA double strand break repair. Mediates RPA2 dephosphorylation by recruiting PPP4C to RPA2 in a DNA damage-dependent manner. RPA2 dephosphorylation is required for the efficient RPA2-mediated recruitment of RAD51 to chromatin following double strand breaks, an essential step for DNA repair. The polypeptide is Serine/threonine-protein phosphatase 4 regulatory subunit 2 (PPP4R2) (Homo sapiens (Human)).